The sequence spans 135 residues: CTP pyrophosphohydrolase (135 aa).

The Nudix hydrolase domain maps to 2 to 127 (KMIEVVAAII…DIPLLEAFMA (126 aa)). Substrate is bound by residues 34 to 39 (FAGGKV), Arg-72, and Asp-118. The Nudix box signature appears at 37-58 (GKVEPDESQRQALVRELREELG).

The protein belongs to the Nudix hydrolase family. In terms of assembly, monomer. It depends on Mg(2+) as a cofactor. Requires Mn(2+) as cofactor.

The enzyme catalyses CTP + H2O = CMP + diphosphate + H(+). It catalyses the reaction dCTP + H2O = dCMP + diphosphate + H(+). Functionally, hydrolase with a preference for pyrimidine substrates. Has high activity with 5-methyl-dCTP, and much lower activity with CTP, dCTP, 5-hydroxy-dCTP, 2-hydroxy-dATP and 8-hydroxy-dGTP. This is CTP pyrophosphohydrolase (nudG) from Escherichia coli (strain K12).